The primary structure comprises 520 residues: Ribonuclease Y (520 aa).

A helical transmembrane segment spans residues 1 to 21 (MEILIIVIAAVVGLALGFAIA). The region spanning 210-295 (CVSVFNLESD…EVVKKTRKQI (86 aa)) is the KH domain. The region spanning 336–429 (LLQHSREVAK…VQVCDAISGA (94 aa)) is the HD domain.

It belongs to the RNase Y family.

It localises to the cell membrane. In terms of biological role, endoribonuclease that initiates mRNA decay. The protein is Ribonuclease Y of Christiangramia forsetii (strain DSM 17595 / CGMCC 1.15422 / KT0803) (Gramella forsetii).